The sequence spans 491 residues: Tyrosine 3-monooxygenase (491 aa).

The residue at position 19 (serine 19) is a Phosphoserine; by CaMK2. The residue at position 31 (serine 31) is a Phosphoserine. At serine 40 the chain carries Phosphoserine; by CaMK2 and PKA. Residues histidine 324, histidine 329, and glutamate 369 each contribute to the Fe cation site. Serine 465 is subject to Phosphoserine.

It belongs to the biopterin-dependent aromatic amino acid hydroxylase family. Homotetramer. Interacts (when phosphorylated at Ser-19) with YWHAG; one YWHAG dimer bounds to one TH tetramer and this interaction may influence the phosphorylation and dephosphorylation of other sites. Interacts with NT5DC2; the interaction results in reduced phosphorylation and decreased catalytic activity of TH. Fe(2+) serves as cofactor. In terms of processing, phosphorylated on Ser-19, Ser-31 and Ser-40 by several protein kinases with different site specificities. Phosphorylation at Ser-31 and Ser-40 leads to an increase of TH activity. Phosphorylation at Ser-40 activates the enzyme and also counteracts the feedback inhibition of TH by catecholamines. Phosphorylation of Ser-19 and Ser-31 triggers the proteasomal degradation of TH through the ubiquitin-proteasome pathway. Phosphorylation at Ser-31 facilitates transport of TH from the soma to the nerve terminals via the microtubule network. Phosphorylation at Ser-19 induces the high-affinity binding to the 14-3-3 protein YWHAG; this interaction may influence the phosphorylation and dephosphorylation of other sites. Ser-19 increases the phosphorylation at Ser-40 in a hierarchical manner, leading to increased activity.

It is found in the cytoplasm. It localises to the perinuclear region. Its subcellular location is the nucleus. The protein localises to the cell projection. The protein resides in the axon. It is found in the cytoplasmic vesicle. It localises to the secretory vesicle. Its subcellular location is the synaptic vesicle. The catalysed reaction is (6R)-L-erythro-5,6,7,8-tetrahydrobiopterin + L-tyrosine + O2 = (4aS,6R)-4a-hydroxy-L-erythro-5,6,7,8-tetrahydrobiopterin + L-dopa. It functions in the pathway catecholamine biosynthesis; dopamine biosynthesis; dopamine from L-tyrosine: step 1/2. Inhibited in feedback fashion by the catecholamine neurotransmitters, especially by dopamine in competition with tetrahydrobiopterin. Phosphorylation of several Ser/Thr residues in the N-terminus regulates the catalytic activity. Ser-31 and Ser-40 are readily phosphorylated to activate the catalytic activity. A Cysteine modification induced by N-ethylmaleimide (NEM), inhibits tyrosine 3-monooxygenase activity through the modification of the Cys-170. Functionally, catalyzes the conversion of L-tyrosine to L-dihydroxyphenylalanine (L-Dopa), the rate-limiting step in the biosynthesis of catecholamines, dopamine, noradrenaline, and adrenaline. Uses tetrahydrobiopterin and molecular oxygen to convert tyrosine to L-Dopa. In addition to tyrosine, is able to catalyze the hydroxylation of phenylalanine and tryptophan with lower specificity. Positively regulates the regression of retinal hyaloid vessels during postnatal development. This is Tyrosine 3-monooxygenase (TH) from Bos taurus (Bovine).